The sequence spans 435 residues: GTPase Der (435 aa).

2 consecutive EngA-type G domains span residues 4–167 (PVVA…PAEK) and 175–350 (ISFS…DNQN). GTP contacts are provided by residues 10–17 (GQPNVGKS), 57–61 (DTGGI), 119–122 (NKAD), 181–188 (GRPNVGKS), 228–232 (DTAGI), and 293–296 (NKWD). In terms of domain architecture, KH-like spans 351 to 435 (QRIQSSVLND…PIKILPRKRK (85 aa)).

It belongs to the TRAFAC class TrmE-Era-EngA-EngB-Septin-like GTPase superfamily. EngA (Der) GTPase family. Associates with the 50S ribosomal subunit.

Its function is as follows. GTPase that plays an essential role in the late steps of ribosome biogenesis. The protein is GTPase Der of Lactobacillus helveticus (strain DPC 4571).